The sequence spans 101 residues: Large ribosomal subunit protein bL28 (101 aa).

It belongs to the bacterial ribosomal protein bL28 family.

In Rhodopseudomonas palustris (strain BisB5), this protein is Large ribosomal subunit protein bL28.